Consider the following 281-residue polypeptide: Homoserine kinase (281 aa).

Position 83-93 (83-93) interacts with ATP; it reads PVSSGLGSSAA.

Belongs to the GHMP kinase family. Homoserine kinase subfamily.

It localises to the cytoplasm. The catalysed reaction is L-homoserine + ATP = O-phospho-L-homoserine + ADP + H(+). It participates in amino-acid biosynthesis; L-threonine biosynthesis; L-threonine from L-aspartate: step 4/5. Its function is as follows. Catalyzes the ATP-dependent phosphorylation of L-homoserine to L-homoserine phosphate. The protein is Homoserine kinase of Thermotoga petrophila (strain ATCC BAA-488 / DSM 13995 / JCM 10881 / RKU-1).